We begin with the raw amino-acid sequence, 320 residues long: Protein rlx (320 aa).

In terms of biological role, this protein is probably required for relaxation complex formation and plasmid mobilization by conjugative plasmids. In Staphylococcus aureus, this protein is Protein rlx (rlx).